Reading from the N-terminus, the 854-residue chain is Selenocysteine insertion sequence-binding protein 2 (854 aa).

4 disordered regions span residues 332–351, 356–394, 417–445, and 488–619; these read ADPKNVSIPSSEALSSDPSY, HIIHPTQKSKASQGSDLEQNEASRKNKKKKEKSTSKYEV, ERRDRIETPKFQSKQQPQDNFKNNVKKSQ, and ECAS…PNHT. 2 stretches are compositionally biased toward polar residues: residues 338 to 350 and 361 to 372; these read SIPSSEALSSDPS and TQKSKASQGSDL. A Nuclear localization signal motif is present at residues 380 to 387; that stretch reads KNKKKKEK. The segment covering 426-445 has biased composition (polar residues); that stretch reads KFQSKQQPQDNFKNNVKKSQ. Residues 536–547 show a composition bias toward basic and acidic residues; sequence ILKERQERKQRL. Over residues 548–559 the composition is skewed to polar residues; sequence QENAVSPAFTSD. The segment covering 560-572 has biased composition (acidic residues); the sequence is DTQDGESGGDDQF. Over residues 593 to 611 the composition is skewed to basic and acidic residues; it reads VEDKSEEPPGTELQRDTEA. An RNA-binding region spans residues 673–694; the sequence is LVLGLREVLKHLKLKKLKCVII. Residues 787–812 are disordered; it reads EPRPQAPPSLPTQGPSCPAEDGPPAL.

Expressed at high levels in testis.

It is found in the nucleus. The protein localises to the mitochondrion. In terms of biological role, mRNA-binding protein that binds to the SECIS (selenocysteine insertion sequence) element present in the 3'-UTR of mRNAs encoding selenoproteins and facilitates the incorporation of the rare amino acid selenocysteine. Insertion of selenocysteine at UGA codons is mediated by SECISBP2 and EEFSEC: SECISBP2 (1) specifically binds the SECIS sequence once the 80S ribosome encounters an in-frame UGA codon and (2) contacts the RPS27A/eS31 of the 40S ribosome before ribosome stalling. (3) GTP-bound EEFSEC then delivers selenocysteinyl-tRNA(Sec) to the 80S ribosome and adopts a preaccommodated state conformation. (4) After GTP hydrolysis, EEFSEC dissociates from the assembly, selenocysteinyl-tRNA(Sec) accommodates, and peptide bond synthesis and selenoprotein elongation occur. This is Selenocysteine insertion sequence-binding protein 2 from Homo sapiens (Human).